We begin with the raw amino-acid sequence, 433 residues long: Glutamyl-tRNA reductase (433 aa).

Residues 49–52 (TCNR), Ser-114, 119–121 (EPQ), and Gln-125 contribute to the substrate site. Cys-50 functions as the Nucleophile in the catalytic mechanism. 201–206 (GAGETI) serves as a coordination point for NADP(+).

This sequence belongs to the glutamyl-tRNA reductase family. In terms of assembly, homodimer.

It catalyses the reaction (S)-4-amino-5-oxopentanoate + tRNA(Glu) + NADP(+) = L-glutamyl-tRNA(Glu) + NADPH + H(+). It functions in the pathway porphyrin-containing compound metabolism; protoporphyrin-IX biosynthesis; 5-aminolevulinate from L-glutamyl-tRNA(Glu): step 1/2. In terms of biological role, catalyzes the NADPH-dependent reduction of glutamyl-tRNA(Glu) to glutamate 1-semialdehyde (GSA). The chain is Glutamyl-tRNA reductase from Histophilus somni (strain 129Pt) (Haemophilus somnus).